Consider the following 319-residue polypeptide: Aliphatic sulfonates import ATP-binding protein SsuB 1 (319 aa).

In terms of domain architecture, ABC transporter spans 63–282; that stretch reads VTLSGVSKRF…ARASAAFAAL (220 aa). Residue 95-102 participates in ATP binding; that stretch reads GRSGCGKS.

Belongs to the ABC transporter superfamily. Aliphatic sulfonates importer (TC 3.A.1.17.2) family. In terms of assembly, the complex is composed of two ATP-binding proteins (SsuB), two transmembrane proteins (SsuC) and a solute-binding protein (SsuA).

It is found in the cell inner membrane. The enzyme catalyses ATP + H2O + aliphatic sulfonate-[sulfonate-binding protein]Side 1 = ADP + phosphate + aliphatic sulfonateSide 2 + [sulfonate-binding protein]Side 1.. Functionally, part of the ABC transporter complex SsuABC involved in aliphatic sulfonates import. Responsible for energy coupling to the transport system. This is Aliphatic sulfonates import ATP-binding protein SsuB 1 from Burkholderia cenocepacia (strain HI2424).